A 259-amino-acid polypeptide reads, in one-letter code: Flap endonuclease Xni (259 aa).

Residue Asp-109 participates in Mg(2+) binding. In terms of domain architecture, 5'-3' exonuclease spans 165–255 (VKPQQLSDYW…FNLQDLRFTA (91 aa)). K(+) contacts are provided by Leu-176, Ile-187, and Ile-190. The interaction with DNA stretch occupies residues 189-194 (GIGPKA).

Belongs to the Xni family. Mg(2+) serves as cofactor. The cofactor is K(+).

Functionally, has flap endonuclease activity. During DNA replication, flap endonucleases cleave the 5'-overhanging flap structure that is generated by displacement synthesis when DNA polymerase encounters the 5'-end of a downstream Okazaki fragment. This Vibrio vulnificus (strain CMCP6) protein is Flap endonuclease Xni.